The primary structure comprises 340 residues: Dihydroorotate dehydrogenase (quinone) (340 aa).

FMN is bound by residues alanine 63–lysine 67 and threonine 87. Substrate is bound at residue lysine 67. Asparagine 112 to phenylalanine 116 provides a ligand contact to substrate. The FMN site is built by asparagine 140 and asparagine 173. Position 173 (asparagine 173) interacts with substrate. The active-site Nucleophile is the serine 176. Position 178 (asparagine 178) interacts with substrate. FMN-binding residues include lysine 218 and threonine 246. Asparagine 247–threonine 248 serves as a coordination point for substrate. FMN-binding positions include glycine 269, glycine 298, and tyrosine 319–threonine 320.

It belongs to the dihydroorotate dehydrogenase family. Type 2 subfamily. As to quaternary structure, monomer. FMN serves as cofactor.

It localises to the cell membrane. The catalysed reaction is (S)-dihydroorotate + a quinone = orotate + a quinol. It functions in the pathway pyrimidine metabolism; UMP biosynthesis via de novo pathway; orotate from (S)-dihydroorotate (quinone route): step 1/1. Functionally, catalyzes the conversion of dihydroorotate to orotate with quinone as electron acceptor. This chain is Dihydroorotate dehydrogenase (quinone), found in Methylococcus capsulatus (strain ATCC 33009 / NCIMB 11132 / Bath).